The primary structure comprises 407 residues: S-adenosylmethionine synthase (407 aa).

H21 lines the ATP pocket. D23 contributes to the Mg(2+) binding site. Residue E49 participates in K(+) binding. L-methionine-binding residues include E62 and Q105. Residues 105 to 115 (QSQEIGAGVDA) form a flexible loop region. Residues 179–181 (DGK), D259, 265–266 (RK), A282, and K286 contribute to the ATP site. D259 contacts L-methionine. K290 contacts L-methionine.

This sequence belongs to the AdoMet synthase family. Homotetramer; dimer of dimers. Mg(2+) is required as a cofactor. The cofactor is K(+).

The protein resides in the cytoplasm. It catalyses the reaction L-methionine + ATP + H2O = S-adenosyl-L-methionine + phosphate + diphosphate. It participates in amino-acid biosynthesis; S-adenosyl-L-methionine biosynthesis; S-adenosyl-L-methionine from L-methionine: step 1/1. Catalyzes the formation of S-adenosylmethionine (AdoMet) from methionine and ATP. The overall synthetic reaction is composed of two sequential steps, AdoMet formation and the subsequent tripolyphosphate hydrolysis which occurs prior to release of AdoMet from the enzyme. The sequence is that of S-adenosylmethionine synthase from Corynebacterium aurimucosum (strain ATCC 700975 / DSM 44827 / CIP 107346 / CN-1) (Corynebacterium nigricans).